The sequence spans 320 residues: ATP-dependent 6-phosphofructokinase (320 aa).

Gly12 is an ATP binding site. Arg22–Arg26 is an ADP binding site. ATP is bound by residues Arg73 to Phe74 and Gly103 to Ser106. Residue Asp104 coordinates Mg(2+). Thr126–Asp128 contributes to the substrate binding site. Residue Asp128 is the Proton acceptor of the active site. Residue Arg155 participates in ADP binding. Substrate contacts are provided by residues Arg163 and Met170–Arg172. Residues Gly186–Glu188, Lys212, and Lys214–His216 each bind ADP. Substrate is bound by residues Glu223, Arg244, and His250–Arg253.

Belongs to the phosphofructokinase type A (PFKA) family. ATP-dependent PFK group I subfamily. Prokaryotic clade 'B1' sub-subfamily. As to quaternary structure, homotetramer. Mg(2+) is required as a cofactor.

Its subcellular location is the cytoplasm. It catalyses the reaction beta-D-fructose 6-phosphate + ATP = beta-D-fructose 1,6-bisphosphate + ADP + H(+). It participates in carbohydrate degradation; glycolysis; D-glyceraldehyde 3-phosphate and glycerone phosphate from D-glucose: step 3/4. Allosterically activated by ADP and other diphosphonucleosides, and allosterically inhibited by phosphoenolpyruvate. Catalyzes the phosphorylation of D-fructose 6-phosphate to fructose 1,6-bisphosphate by ATP, the first committing step of glycolysis. The protein is ATP-dependent 6-phosphofructokinase of Aliivibrio salmonicida (strain LFI1238) (Vibrio salmonicida (strain LFI1238)).